The primary structure comprises 223 residues: MGQKGCPIGFRTGVTKKWRSLWYGNKQEFGKFLIEDVRIRQFLRKKPSCQGAAGFVVRRMSGKIEVTIQTARPGLVIGKKGAEVDLLKEELRALTGKEVWLEIAEIKRPELNAKLVADNIARQIERRVSFRRAMKKAMQSVMDAGAVGVKIQVSGRLAGAEIARSEWYKNGRVPLHTLRADIDYATACAETTYGIIGIKVWINLGENSSSTTPNNPAAPSAAA.

Positions 39–107 constitute a KH type-2 domain; sequence IRQFLRKKPS…EVWLEIAEIK (69 aa).

It belongs to the universal ribosomal protein uS3 family. In terms of assembly, part of the 30S ribosomal subunit. Forms a tight complex with proteins S10 and S14.

In terms of biological role, binds the lower part of the 30S subunit head. Binds mRNA in the 70S ribosome, positioning it for translation. The sequence is that of Small ribosomal subunit protein uS3 from Chlamydia pneumoniae (Chlamydophila pneumoniae).